Reading from the N-terminus, the 99-residue chain is Aspartyl/glutamyl-tRNA(Asn/Gln) amidotransferase subunit C (99 aa).

The protein belongs to the GatC family. Heterotrimer of A, B and C subunits.

The catalysed reaction is L-glutamyl-tRNA(Gln) + L-glutamine + ATP + H2O = L-glutaminyl-tRNA(Gln) + L-glutamate + ADP + phosphate + H(+). It carries out the reaction L-aspartyl-tRNA(Asn) + L-glutamine + ATP + H2O = L-asparaginyl-tRNA(Asn) + L-glutamate + ADP + phosphate + 2 H(+). Allows the formation of correctly charged Asn-tRNA(Asn) or Gln-tRNA(Gln) through the transamidation of misacylated Asp-tRNA(Asn) or Glu-tRNA(Gln) in organisms which lack either or both of asparaginyl-tRNA or glutaminyl-tRNA synthetases. The reaction takes place in the presence of glutamine and ATP through an activated phospho-Asp-tRNA(Asn) or phospho-Glu-tRNA(Gln). The sequence is that of Aspartyl/glutamyl-tRNA(Asn/Gln) amidotransferase subunit C from Cupriavidus taiwanensis (strain DSM 17343 / BCRC 17206 / CCUG 44338 / CIP 107171 / LMG 19424 / R1) (Ralstonia taiwanensis (strain LMG 19424)).